We begin with the raw amino-acid sequence, 229 residues long: N-(5'-phosphoribosyl)anthranilate isomerase (229 aa).

It belongs to the TrpF family.

The enzyme catalyses N-(5-phospho-beta-D-ribosyl)anthranilate = 1-(2-carboxyphenylamino)-1-deoxy-D-ribulose 5-phosphate. The protein operates within amino-acid biosynthesis; L-tryptophan biosynthesis; L-tryptophan from chorismate: step 3/5. The protein is N-(5'-phosphoribosyl)anthranilate isomerase of Clostridium beijerinckii (strain ATCC 51743 / NCIMB 8052) (Clostridium acetobutylicum).